Reading from the N-terminus, the 100-residue chain is UPF0213 protein YhbQ (100 aa).

The region spanning 2 to 77 (TPWFLYLIRT…KQLTKRQKER (76 aa)) is the GIY-YIG domain.

This sequence belongs to the UPF0213 family.

The chain is UPF0213 protein YhbQ from Escherichia coli O127:H6 (strain E2348/69 / EPEC).